Here is a 701-residue protein sequence, read N- to C-terminus: Pre-mRNA-splicing factor CLF1 (701 aa).

12 HAT repeats span residues 43–75 (SYQQ…WEIE), 78–110 (HDFP…LELS), 112–144 (KNIN…TEEM), 146–177 (KNYP…FEAR), 179–210 (EEKE…YEME), 214–253 (DDVN…SWTS), 266–299 (EIFK…FEKN), 309–341 (SVLI…LLQN), 343–378 (SNKS…FWIW), 388–424 (NNPV…FELR), 545–576 (MQYD…FESS), and 601–642 (SQIE…VNGS).

The protein belongs to the crooked-neck family. Associated with the spliceosome.

It localises to the nucleus. Its function is as follows. Involved in pre-mRNA splicing and cell cycle progression. Required for the spliceosome assembly and initiation of the DNA replication. This is Pre-mRNA-splicing factor CLF1 (CLF1) from Candida albicans (strain SC5314 / ATCC MYA-2876) (Yeast).